Here is an 896-residue protein sequence, read N- to C-terminus: Sodium/hydrogen exchanger 5 (896 aa).

Residues 1 to 45 lie on the Cytoplasmic side of the membrane; sequence MLRAALSLLALPLAGAAEEPTQKPESPGEPPPGLELFRWQWHEVE. The chain crosses the membrane as a helical span at residues 46-66; the sequence is APYLVALWILVASLAKIVFHL. Residues 67–73 are Extracellular-facing; the sequence is SRKVTSL. The helical transmembrane segment at 74–94 threads the bilayer; that stretch reads VPESCLLILLGLVLGGIVLAV. Over 95–103 the chain is Cytoplasmic; sequence AKKAEYQLE. A helical transmembrane segment spans residues 104–124; sequence PGTFFLFLLPPIVLDSGYFMP. At 125–134 the chain is on the extracellular side; sequence SRLFFDNLGA. The helical transmembrane segment at 135–155 threads the bilayer; the sequence is ILTYAVVGTLWNAFTTGAALW. Over 156 to 173 the chain is Cytoplasmic; the sequence is GLQQAGLVAPRVQAGLLD. The helical transmembrane segment at 174–194 threads the bilayer; it reads FLLFGSLISAVDPVAVLAVFE. Over 195–200 the chain is Extracellular; it reads EVHVNE. Asn-199 is a glycosylation site (N-linked (GlcNAc...) asparagine). A helical transmembrane segment spans residues 201 to 221; it reads TLFIIVFGESLLNDAVTVVLY. Topologically, residues 222-246 are cytoplasmic; that stretch reads KVCNSFVEMGSANVQATDYLKGVAS. Residues 247-267 form a helical membrane-spanning segment; that stretch reads LFVVSLGGAAVGLVFAFLLAL. Residues 268-276 lie on the Extracellular side of the membrane; sequence TTRFTKRVR. Residues 277 to 297 traverse the membrane as a helical segment; the sequence is IIEPLLVFLLAYAAYLTAEMA. Topologically, residues 298–331 are cytoplasmic; it reads SLSAILAVTMCGLGCKKYVEANISHKSRTTVKYT. A helical transmembrane segment spans residues 332–352; it reads MKTLASCAETVIFMLLGISAV. The Extracellular segment spans residues 353–360; sequence DSSKWAWD. Residues 361–381 traverse the membrane as a helical segment; sequence SGLVLGTLIFILFFRALGVVL. Residues 382-398 lie on the Cytoplasmic side of the membrane; sequence QTWVLNQFRLVPLDKID. The chain crosses the membrane as a helical span at residues 399–419; sequence QVVMSYGGLRGAVAFALVILL. The Extracellular segment spans residues 420 to 428; it reads DRTKVPAKD. Residues 429-449 form a helical membrane-spanning segment; sequence YFVATTIVVVFFTVIVQGLTI. Residues 450 to 896 are Cytoplasmic-facing; sequence KPLVKWLKVK…CIQFNRGSRL (447 aa). Positions 576–721 are required for interaction with ARRB2; sequence GSGACLDLQV…SETEKEDDEG (146 aa). 3 disordered regions span residues 658-686, 701-720, and 818-864; these read TKSK…GKHR, ESEE…EDDE, and HPRG…QQQE. The span at 660–672 shows a compositional bias: basic residues; it reads SKPRPRKTGRRKK. Positions 854 to 864 are enriched in polar residues; the sequence is ESSADLPQQQE.

Belongs to the monovalent cation:proton antiporter 1 (CPA1) transporter (TC 2.A.36) family. In terms of assembly, interacts with CHP1 and CHP2. Interacts with ARRB2; facilitates the endocytosis of SLC9A5 from the plasma membrane. Interacts with RACK1; this interaction positively regulates SLC9A5 activity and promotes SLC9A5 localization to focal adhesions. Interacts with SCAMP2; this interaction regulates SLC9A5 cell-surface targeting and SLC9A5 activity. Post-translationally, phosphorylated by PRKAA2; promotes its accumulation at the cell surface. Phosphorylated by CSNK2A1 in a manner favoring its beta-arrestin binding and endocytosis. Mainly expressed in brain. Expressed in neurons of the central and peripheral nervous system. Expressed also in testis, spleen, and skeletal muscle.

It localises to the cell membrane. It is found in the recycling endosome membrane. Its subcellular location is the cell projection. The protein localises to the dendritic spine membrane. The protein resides in the synaptic cell membrane. It localises to the cell junction. It is found in the focal adhesion. It catalyses the reaction Na(+)(in) + H(+)(out) = Na(+)(out) + H(+)(in). With respect to regulation, ATP-depletion almost completely abolishes SLC9A5 activity. Inhibited by amiloride compounds. Its function is as follows. Plasma membrane Na(+)/H(+) antiporter. Mediates the electroneutral exchange of intracellular H(+) ions for extracellular Na(+) in 1:1 stoichiometry, thus regulating intracellular pH homeostasis, in particular in neural tissues. Acts as a negative regulator of dendritic spine growth. Plays a role in postsynaptic remodeling and signaling. Can also contribute to organellar pH regulation, with consequences for receptor tyrosine kinase trafficking. This chain is Sodium/hydrogen exchanger 5, found in Homo sapiens (Human).